Reading from the N-terminus, the 108-residue chain is Ig light chain C region (108 aa).

One can recognise an Ig-like domain in the interval 7-102 (PTVSIYCPSL…LTPALAKSFQ (96 aa)). Disulfide bonds link cysteine 13-cysteine 106 and cysteine 28-cysteine 86.

The sequence is that of Ig light chain C region from Aquarana catesbeiana (American bullfrog).